Consider the following 398-residue polypeptide: Dihydrolipoyllysine-residue succinyltransferase component of 2-oxoglutarate dehydrogenase complex (398 aa).

One can recognise a Lipoyl-binding domain in the interval 2-77 (SIKIIIPSLG…TVGEEVGEIN (76 aa)). Lys43 is subject to N6-lipoyllysine. A Peripheral subunit-binding (PSBD) domain is found at 112 to 149 (ILAPSVQKLVTENKLDPNNIKGTGRGGRITKYDVLETI). Catalysis depends on residues His369 and Asp373.

The protein belongs to the 2-oxoacid dehydrogenase family. Forms a 24-polypeptide structural core with octahedral symmetry. Part of the 2-oxoglutarate dehydrogenase (OGDH) complex composed of E1 (2-oxoglutarate dehydrogenase), E2 (dihydrolipoamide succinyltransferase) and E3 (dihydrolipoamide dehydrogenase); the complex contains multiple copies of the three enzymatic components (E1, E2 and E3). (R)-lipoate serves as cofactor.

It carries out the reaction N(6)-[(R)-dihydrolipoyl]-L-lysyl-[protein] + succinyl-CoA = N(6)-[(R)-S(8)-succinyldihydrolipoyl]-L-lysyl-[protein] + CoA. The protein operates within amino-acid degradation; L-lysine degradation via saccharopine pathway; glutaryl-CoA from L-lysine: step 6/6. In terms of biological role, E2 component of the 2-oxoglutarate dehydrogenase (OGDH) complex which catalyzes the second step in the conversion of 2-oxoglutarate to succinyl-CoA and CO(2). This chain is Dihydrolipoyllysine-residue succinyltransferase component of 2-oxoglutarate dehydrogenase complex (sucB), found in Rickettsia typhi (strain ATCC VR-144 / Wilmington).